Consider the following 713-residue polypeptide: Calpastatin (713 aa).

Disordered regions lie at residues 1-187 and 211-506; these read MNPT…LDPM and DKKE…PVLP. A compositionally biased stretch (basic residues) spans 21 to 30; sequence PNKKRHKKQA. Residue K32 forms a Glycyl lysine isopeptide (Lys-Gly) (interchain with G-Cter in SUMO2) linkage. Basic and acidic residues predominate over residues 46–63; sequence VVHEKKTQEVKPKEHPEP. At K50 the chain carries N6-acetyllysine. Residues 85–94 show a composition bias toward polar residues; sequence SRSNEQPTSE. Phosphoserine occurs at positions 87 and 134. A Phosphothreonine modification is found at T136. An Inhibitory domain 1 repeat occupies 171–223; sequence TEEDNTTYTGPEVLDPMSSTYIEELGKREVTLPPKYRELLDKKEGIPVPPPDT. At S244 the chain carries Phosphoserine. Composition is skewed to basic and acidic residues over residues 248–258, 304–332, and 342–367; these read DGKKTEKEKST, RKSE…KKCG, and YRLK…KPLS. An Inhibitory domain 2 repeat occupies 307–359; sequence EPELDLSSIKEIDEAKAKEEKLKKCGEDDETVPPEYRLKPAMDKDGKPLLPEA. Phosphoserine occurs at positions 367, 369, and 376. The span at 370–379 shows a compositional bias: acidic residues; it reads ELIDELSEDF. A compositionally biased stretch (basic and acidic residues) spans 380 to 397; sequence DQSKRKEKQSKPTEKTKE. S441 is modified (phosphoserine). Residues 443–502 are compositionally biased toward basic and acidic residues; the sequence is GKKEADPEDGKPVEDKVKEKAKEEDREKLGEKEETIPPDYRLEEVKDKDGKTLPHKDPKE. An Inhibitory domain 3 repeat occupies 447 to 500; sequence ADPEDGKPVEDKVKEKAKEEDREKLGEKEETIPPDYRLEEVKDKDGKTLPHKDP. Phosphoserine is present on residues S517 and S528. Residues 536–713 form a disordered region; that stretch reads SAAVSEVVSQ…KQKSDGKSTS (178 aa). Polar residues predominate over residues 542–553; sequence VVSQTSAPTTHS. Phosphoserine is present on residues S575 and S577. Residues 583 to 636 form an Inhibitory domain 4 repeat; the sequence is PDPDENKPIEDKVKEKAEAEHRDKLGERDDTIPPEYRHLLDKDEEGKSTKPPTK. 2 stretches are compositionally biased toward basic and acidic residues: residues 583–646 and 691–713; these read PDPD…KPEA and KAKD…KSTS.

This sequence belongs to the protease inhibitor I27 (calpastatin) family.

Its function is as follows. Specific inhibition of calpain (calcium-dependent cysteine protease). Plays a key role in postmortem tenderization of meat and have been proposed to be involved in muscle protein degradation in living tissue. This is Calpastatin (CAST) from Sus scrofa (Pig).